A 138-amino-acid chain; its full sequence is Ribosome-binding factor A (138 aa).

A disordered region spans residues 112 to 138 (EARTQGQEPAADVEPAPGAAPDDEAEE). The segment covering 119 to 131 (EPAADVEPAPGAA) has biased composition (low complexity).

This sequence belongs to the RbfA family. Monomer. Binds 30S ribosomal subunits, but not 50S ribosomal subunits or 70S ribosomes.

The protein localises to the cytoplasm. Functionally, one of several proteins that assist in the late maturation steps of the functional core of the 30S ribosomal subunit. Associates with free 30S ribosomal subunits (but not with 30S subunits that are part of 70S ribosomes or polysomes). Required for efficient processing of 16S rRNA. May interact with the 5'-terminal helix region of 16S rRNA. The sequence is that of Ribosome-binding factor A from Anaeromyxobacter dehalogenans (strain 2CP-C).